A 496-amino-acid chain; its full sequence is Putative BTB/POZ domain and WD-repeat protein R61 (496 aa).

In terms of domain architecture, BTB spans 8–78 (SNINLILNDE…MFSDIDIYKN (71 aa)). WD repeat units lie at residues 149–189 (KFPR…FNSK), 208–248 (IFDN…KEFQ), 250–285 (DYKI…RKVL), 291–330 (KSIG…IIKW), 333–371 (VSKS…KILE), and 422–464 (MYFS…DIIY).

Belongs to the mimivirus BTB/WD family.

This Acanthamoeba polyphaga (Amoeba) protein is Putative BTB/POZ domain and WD-repeat protein R61.